We begin with the raw amino-acid sequence, 54 residues long: Large ribosomal subunit protein bL32c (54 aa).

It belongs to the bacterial ribosomal protein bL32 family.

It is found in the plastid. The protein resides in the chloroplast. This Gossypium barbadense (Sea Island cotton) protein is Large ribosomal subunit protein bL32c.